The following is a 1008-amino-acid chain: Histone deacetylase complex subunit SAP130-A (1008 aa).

The span at 1–31 (MNSQQFPRQAASMPSPQVSNSGASVGQNVQG) shows a compositional bias: polar residues. Disordered stretches follow at residues 1–44 (MNSQ…DVQS), 113–134 (SKSTMPSRPIAPAPPSAMSAVP), 415–435 (IQSDYGTERGNLIPIPGHRAS), and 617–720 (TPGG…PATI). Over residues 35 to 44 (EVARDMDVQS) the composition is skewed to basic and acidic residues. Positions 618–644 (PGGTTVMQSHSQSPGIGSSPAQGSSPR) are enriched in polar residues. The segment covering 678 to 697 (ADQPSAAASLPSSHHPAAAV) has biased composition (low complexity).

Belongs to the SAP130 family.

The protein resides in the nucleus. In terms of biological role, acts as a transcriptional repressor. In Xenopus laevis (African clawed frog), this protein is Histone deacetylase complex subunit SAP130-A (sap130-a).